A 337-amino-acid chain; its full sequence is 2-ketoarginine methyltransferase (337 aa).

The protein belongs to the 2-ketoarginine methyltransferase family.

It carries out the reaction 5-guanidino-2-oxopentanoate + S-adenosyl-L-methionine = (3R)-5-guanidino-3-methyl-2-oxopentanoate + S-adenosyl-L-homocysteine + H(+). Its pathway is antibiotic biosynthesis. S-adenosyl-L-methionine-dependent methyltransferase involved in the formation of the rare amino acid 3-methylarginine (MeArg), which is incorporated into the peptidyl nucleoside antibiotic arginomycin. Transfers the methyl group from S-adenosyl-L-methionine into 5-guanidino-2-oxopentanoate acid to yield 5-guanidino-3-methyl-2-oxopentanoate, a precursor of MeArg. This chain is 2-ketoarginine methyltransferase, found in Streptomyces arginensis.